We begin with the raw amino-acid sequence, 583 residues long: 1-deoxy-D-xylulose-5-phosphate synthase (583 aa).

Thiamine diphosphate-binding positions include H74 and 115 to 117; that span reads GHS. D146 contributes to the Mg(2+) binding site. Thiamine diphosphate is bound by residues 147–148, N175, F244, and E327; that span reads GG. N175 provides a ligand contact to Mg(2+).

It belongs to the transketolase family. DXPS subfamily. In terms of assembly, homodimer. It depends on Mg(2+) as a cofactor. The cofactor is thiamine diphosphate.

It carries out the reaction D-glyceraldehyde 3-phosphate + pyruvate + H(+) = 1-deoxy-D-xylulose 5-phosphate + CO2. Its pathway is metabolic intermediate biosynthesis; 1-deoxy-D-xylulose 5-phosphate biosynthesis; 1-deoxy-D-xylulose 5-phosphate from D-glyceraldehyde 3-phosphate and pyruvate: step 1/1. Catalyzes the acyloin condensation reaction between C atoms 2 and 3 of pyruvate and glyceraldehyde 3-phosphate to yield 1-deoxy-D-xylulose-5-phosphate (DXP). The protein is 1-deoxy-D-xylulose-5-phosphate synthase of Myxococcus xanthus (strain DK1622).